Consider the following 338-residue polypeptide: Holliday junction branch migration complex subunit RuvB (338 aa).

The segment at 1–181 (MDRIVEIEKV…FGMDFRLQFY (181 aa)) is large ATPase domain (RuvB-L). Residues L20, R21, G62, K65, T66, T67, 128–130 (EDF), R171, Y181, and R218 each bind ATP. T66 lines the Mg(2+) pocket. The small ATPAse domain (RuvB-S) stretch occupies residues 182–252 (STAELSRIIQ…RAKEGLNALG (71 aa)). The segment at 255 to 338 (SLGFDEMDIK…NRTKGLFDGE (84 aa)) is head domain (RuvB-H). R309 and R314 together coordinate DNA.

This sequence belongs to the RuvB family. In terms of assembly, homohexamer. Forms an RuvA(8)-RuvB(12)-Holliday junction (HJ) complex. HJ DNA is sandwiched between 2 RuvA tetramers; dsDNA enters through RuvA and exits via RuvB. An RuvB hexamer assembles on each DNA strand where it exits the tetramer. Each RuvB hexamer is contacted by two RuvA subunits (via domain III) on 2 adjacent RuvB subunits; this complex drives branch migration. In the full resolvosome a probable DNA-RuvA(4)-RuvB(12)-RuvC(2) complex forms which resolves the HJ.

The protein localises to the cytoplasm. The enzyme catalyses ATP + H2O = ADP + phosphate + H(+). Functionally, the RuvA-RuvB-RuvC complex processes Holliday junction (HJ) DNA during genetic recombination and DNA repair, while the RuvA-RuvB complex plays an important role in the rescue of blocked DNA replication forks via replication fork reversal (RFR). RuvA specifically binds to HJ cruciform DNA, conferring on it an open structure. The RuvB hexamer acts as an ATP-dependent pump, pulling dsDNA into and through the RuvAB complex. RuvB forms 2 homohexamers on either side of HJ DNA bound by 1 or 2 RuvA tetramers; 4 subunits per hexamer contact DNA at a time. Coordinated motions by a converter formed by DNA-disengaged RuvB subunits stimulates ATP hydrolysis and nucleotide exchange. Immobilization of the converter enables RuvB to convert the ATP-contained energy into a lever motion, pulling 2 nucleotides of DNA out of the RuvA tetramer per ATP hydrolyzed, thus driving DNA branch migration. The RuvB motors rotate together with the DNA substrate, which together with the progressing nucleotide cycle form the mechanistic basis for DNA recombination by continuous HJ branch migration. Branch migration allows RuvC to scan DNA until it finds its consensus sequence, where it cleaves and resolves cruciform DNA. The polypeptide is Holliday junction branch migration complex subunit RuvB (Campylobacter curvus (strain 525.92)).